The primary structure comprises 663 residues: MSNSQANAGSSGSADEPTLNPSGSATLVPNLTTTNASSQATPASTIPQQQQPQQSQPQPQPQPPPHIVGASTADAGGGVGVVVAGGSEGVNLDSSPRESGDDSEDESEILEESPCGRWLKRREEVDQRDVPGIDCVHLAMDTEEGVEVVWNEVQYANMQELKSQEEKMRQVFDNLLQLDHQNIVKFHRYWTDTQQAERPRVIFITEYMSSGSLKQFLKRTKRNAKRLPLESWRRWCTQILSALSYLHSCTPPIIHGNLTCDSIFIQHNGLVKIGSVVPDAVHYSVRRQWDRESAREQERERGAHYFQAPEYGAAEQLTAALDIYAFGMCALEMAALEIQPSNSESTAINEETIQRTICSLESDLQRDLIEKCLNPQPQGRPSANDLLFHPLLFEVHSLKLLTAHCLVFSPANRTMFSETAFDGLMQRYYQPDVIMAQLMSGGQERQYRLADVAGADKLEKFVEDVKYGVYPLITYNGKKPPNFRSRAASPERADSVKSATPEPVDTESRRIVNMMCSVKIKEDSNDIIMTILLRMDDKMNRQLTCQVNENDTAADLTSELVRLGFVHLDDQDKIEVLLEETLKAGVMSDGAGAESSGAGVTTTATMAALEQLERNWSISDADKTMGSSMSSPATAMMYVPQDQQQYQQQQQEADVDQSGTTSN.

The segment covering 1–14 (MSNSQANAGSSGSA) has biased composition (low complexity). The segment at 1 to 112 (MSNSQANAGS…SEDESEILEE (112 aa)) is disordered. Residues 19 to 46 (LNPSGSATLVPNLTTTNASSQATPASTI) are compositionally biased toward polar residues. Low complexity-rich tracts occupy residues 47 to 57 (PQQQQPQQSQP) and 81 to 94 (VVVA…NLDS). A compositionally biased stretch (acidic residues) spans 101 to 111 (DDSEDESEILE). The Protein kinase domain occupies 122–392 (REEVDQRDVP…ANDLLFHPLL (271 aa)). Disordered regions lie at residues 481-505 (PNFR…EPVD) and 638-663 (YVPQ…TTSN). Serine 489, serine 495, and serine 498 each carry phosphoserine. At threonine 500 the chain carries Phosphothreonine. Over residues 641–652 (QDQQQYQQQQQE) the composition is skewed to low complexity.

Belongs to the protein kinase superfamily. Ser/Thr protein kinase family.

It localises to the cytoplasm. Its subcellular location is the cell cortex. May play a role in subcellular trafficking between the endoplasmic reticulum and Golgi apparatus. This is Nuclear receptor-binding protein homolog from Drosophila pseudoobscura pseudoobscura (Fruit fly).